The sequence spans 643 residues: Arginine--tRNA ligase, mitochondrial (643 aa).

The 'HIGH' region motif lies at 188–198 (PNIAKPFHAGH).

It belongs to the class-I aminoacyl-tRNA synthetase family.

The protein localises to the mitochondrion matrix. The catalysed reaction is tRNA(Arg) + L-arginine + ATP = L-arginyl-tRNA(Arg) + AMP + diphosphate. This Saccharomyces cerevisiae (strain ATCC 204508 / S288c) (Baker's yeast) protein is Arginine--tRNA ligase, mitochondrial (MSR1).